We begin with the raw amino-acid sequence, 305 residues long: Ribonuclease Z (305 aa).

H61, H63, D65, H66, H138, D208, and H266 together coordinate Zn(2+). Residue D65 is the Proton acceptor of the active site.

The protein belongs to the RNase Z family. As to quaternary structure, homodimer. Zn(2+) is required as a cofactor.

The enzyme catalyses Endonucleolytic cleavage of RNA, removing extra 3' nucleotides from tRNA precursor, generating 3' termini of tRNAs. A 3'-hydroxy group is left at the tRNA terminus and a 5'-phosphoryl group is left at the trailer molecule.. Functionally, zinc phosphodiesterase, which displays some tRNA 3'-processing endonuclease activity. Probably involved in tRNA maturation, by removing a 3'-trailer from precursor tRNA. The chain is Ribonuclease Z from Methanosarcina acetivorans (strain ATCC 35395 / DSM 2834 / JCM 12185 / C2A).